The sequence spans 238 residues: Aerobic respiration control protein ArcA (238 aa).

The region spanning 5 to 118 (HILIVEDELV…ELTIRARNLL (114 aa)) is the Response regulatory domain. Asp54 carries the post-translational modification 4-aspartylphosphate. The ompR/PhoB-type DNA-binding region spans 134–234 (VESYKFNGWE…IHGEGYRFCG (101 aa)).

Phosphorylated by ArcB.

The protein localises to the cytoplasm. Functionally, member of the two-component regulatory system ArcB/ArcA. Represses a wide variety of aerobic enzymes under anaerobic conditions. It may also be involved in the osmoregulation of envelope proteins. When activated by ArcB, it negatively regulates the expression of genes of aerobic function. Activates the transcription of the plfB operon by binding to its promoter. The polypeptide is Aerobic respiration control protein ArcA (arcA) (Escherichia coli O157:H7).